The sequence spans 187 residues: MNLQHHFLIAMPALQDPIFRRSVVYICEHNEDGAMGIIINKPLENLQIEGILEKLKITPEPRDPAIRLDKAVMLGGPLAEDRGFILHTPPSRFSSSIRISDNTVITTSRDVLETLGTPEQPSEVLVALGYSSWDKGQLEQELMDNAWLTAPADLNILFKTPIADRWRDAAKLIGIDILTMPGVAGHA.

This sequence belongs to the UPF0301 (AlgH) family.

This Citrobacter koseri (strain ATCC BAA-895 / CDC 4225-83 / SGSC4696) protein is UPF0301 protein CKO_04323.